Here is a 430-residue protein sequence, read N- to C-terminus: Putative golgin subfamily A member 8D (430 aa).

The stretch at Glu2–Leu217 forms a coiled coil. 4 disordered regions span residues Leu138–Arg158, Leu217–Pro239, Pro290–Ala331, and Pro382–Gln406. The span at His222–Pro235 shows a compositional bias: basic and acidic residues. Gly residues predominate over residues Pro303 to Gly316.

The protein belongs to the GOLGA8 family.

The polypeptide is Putative golgin subfamily A member 8D (GOLGA8DP) (Homo sapiens (Human)).